We begin with the raw amino-acid sequence, 76 residues long: Protein CYSTEINE-RICH TRANSMEMBRANE MODULE 11 (76 aa).

Residues 19–45 form a disordered region; that stretch reads GPPPPVGVPPQYYPPPPPPPPPPPPPR. The chain crosses the membrane as a helical span at residues 47 to 63; sequence VGFLEGLLAALCCCCLV.

Belongs to the CYSTM1 family. As to quaternary structure, heterodimers. Interacts with CYSTM6, CYSTM7 and WIH1/CYSTM13. Mostly expressed in stems, siliques, leaves and flowers and, to a lower extent, in roots.

The protein resides in the cell membrane. It localises to the cytoplasm. Its function is as follows. Involved in resistance to abiotic stress. The sequence is that of Protein CYSTEINE-RICH TRANSMEMBRANE MODULE 11 from Arabidopsis thaliana (Mouse-ear cress).